The chain runs to 525 residues: GMP synthase [glutamine-hydrolyzing] (525 aa).

The Glutamine amidotransferase type-1 domain occupies 9–207 (RILILDFGSQ…VLDICRCTPL (199 aa)). Cysteine 86 functions as the Nucleophile in the catalytic mechanism. Active-site residues include histidine 181 and glutamate 183. The GMPS ATP-PPase domain maps to 208-400 (WTPAKIIEDA…LGLPYDMLYR (193 aa)). 235 to 241 (SGGVDSS) lines the ATP pocket.

Homodimer.

It catalyses the reaction XMP + L-glutamine + ATP + H2O = GMP + L-glutamate + AMP + diphosphate + 2 H(+). Its pathway is purine metabolism; GMP biosynthesis; GMP from XMP (L-Gln route): step 1/1. Catalyzes the synthesis of GMP from XMP. In Sodalis glossinidius (strain morsitans), this protein is GMP synthase [glutamine-hydrolyzing].